We begin with the raw amino-acid sequence, 226 residues long: ATP synthase F(0) complex subunit a (226 aa).

The next 6 membrane-spanning stretches (helical) occupy residues 6 to 26, 68 to 88, 97 to 117, 138 to 158, 164 to 184, and 193 to 213; these read FATF…IMLF, WALM…LGLL, QLSM…LMGF, VPML…ALAV, ITAG…LCSI, and FIIL…QAYV.

This sequence belongs to the ATPase A chain family. Component of the ATP synthase complex composed at least of ATP5F1A/subunit alpha, ATP5F1B/subunit beta, ATP5MC1/subunit c (homooctomer), MT-ATP6/subunit a, MT-ATP8/subunit 8, ATP5ME/subunit e, ATP5MF/subunit f, ATP5MG/subunit g, ATP5MK/subunit k, ATP5MJ/subunit j, ATP5F1C/subunit gamma, ATP5F1D/subunit delta, ATP5F1E/subunit epsilon, ATP5PF/subunit F6, ATP5PB/subunit b, ATP5PD/subunit d, ATP5PO/subunit OSCP. ATP synthase complex consists of a soluble F(1) head domain (subunits alpha(3) and beta(3)) - the catalytic core - and a membrane F(0) domain - the membrane proton channel (subunits c, a, 8, e, f, g, k and j). These two domains are linked by a central stalk (subunits gamma, delta, and epsilon) rotating inside the F1 region and a stationary peripheral stalk (subunits F6, b, d, and OSCP). Interacts with DNAJC30; interaction is direct.

The protein localises to the mitochondrion inner membrane. The catalysed reaction is H(+)(in) = H(+)(out). Subunit a, of the mitochondrial membrane ATP synthase complex (F(1)F(0) ATP synthase or Complex V) that produces ATP from ADP in the presence of a proton gradient across the membrane which is generated by electron transport complexes of the respiratory chain. ATP synthase complex consist of a soluble F(1) head domain - the catalytic core - and a membrane F(1) domain - the membrane proton channel. These two domains are linked by a central stalk rotating inside the F(1) region and a stationary peripheral stalk. During catalysis, ATP synthesis in the catalytic domain of F(1) is coupled via a rotary mechanism of the central stalk subunits to proton translocation. With the subunit c (ATP5MC1), forms the proton-conducting channel in the F(0) domain, that contains two crucial half-channels (inlet and outlet) that facilitate proton movement from the mitochondrial intermembrane space (IMS) into the matrix. Protons are taken up via the inlet half-channel and released through the outlet half-channel, following a Grotthuss mechanism. The polypeptide is ATP synthase F(0) complex subunit a (Osphranter robustus (Wallaroo)).